A 437-amino-acid chain; its full sequence is MEILMKSGDLNKYDLVKNTLVLVLAGGRGSRLHELTDKRAKPALYFGGNRRIIDFALSNCINSGLNRIGVVTQYAAHSLLRHLQTGWSFLPQERGEFVDMLPARQQIDDSTWYRGTADAVYQNMAIIKNHYRPKYILILAGDHIYKQDYSVMLMDHVNSGAKCTIGCIEVPRSEAHEFGVMAVNENLKVKAFVEKPKDPPAMVGKPDVSLTSMGIYVFDADYLYKMLDREVGTPNTSHDFGKDVLPKCLEEGALYAHPFSRSCMGRNTEGEIYWRDVGTLDSFWQSNIDLVSENPQLDIYDQSWPIRGNPVQAYPSKFFYKHSNVHPVDNSLIGGGCVITDASISNSVLFDRIKIDSFSKVDHCVVLPQVKIGKNCVLKNCIIDRECEIPDGMQIGVDMEEDKNRFRISSTGKVILVTPKMLKILEGHEIGEEGHLD.

Residues Tyr-113, Gly-179, 194–195 (EK), and Ser-212 contribute to the alpha-D-glucose 1-phosphate site.

The protein belongs to the bacterial/plant glucose-1-phosphate adenylyltransferase family. Homotetramer.

The enzyme catalyses alpha-D-glucose 1-phosphate + ATP + H(+) = ADP-alpha-D-glucose + diphosphate. Its pathway is glycan biosynthesis; glycogen biosynthesis. Involved in the biosynthesis of ADP-glucose, a building block required for the elongation reactions to produce glycogen. Catalyzes the reaction between ATP and alpha-D-glucose 1-phosphate (G1P) to produce pyrophosphate and ADP-Glc. In Haemophilus influenzae (strain 86-028NP), this protein is Glucose-1-phosphate adenylyltransferase.